Consider the following 155-residue polypeptide: S-ribosylhomocysteine lyase (155 aa).

Positions 54, 58, and 122 each coordinate Fe cation.

The protein belongs to the LuxS family. In terms of assembly, homodimer. It depends on Fe cation as a cofactor.

The catalysed reaction is S-(5-deoxy-D-ribos-5-yl)-L-homocysteine = (S)-4,5-dihydroxypentane-2,3-dione + L-homocysteine. Its function is as follows. Involved in the synthesis of autoinducer 2 (AI-2) which is secreted by bacteria and is used to communicate both the cell density and the metabolic potential of the environment. The regulation of gene expression in response to changes in cell density is called quorum sensing. Catalyzes the transformation of S-ribosylhomocysteine (RHC) to homocysteine (HC) and 4,5-dihydroxy-2,3-pentadione (DPD). This chain is S-ribosylhomocysteine lyase, found in Deinococcus deserti (strain DSM 17065 / CIP 109153 / LMG 22923 / VCD115).